Here is a 661-residue protein sequence, read N- to C-terminus: DNA ligase (661 aa).

Residues 31–35, 79–80, and Glu-112 contribute to the NAD(+) site; these read DKEYD and SL. The active-site N6-AMP-lysine intermediate is Lys-114. Arg-135, Glu-169, Lys-281, and Lys-305 together coordinate NAD(+). Cys-398, Cys-401, Cys-414, and Cys-420 together coordinate Zn(2+). Positions 578-661 constitute a BRCT domain; it reads QQENIFLGKT…ISEAEFEAML (84 aa).

It belongs to the NAD-dependent DNA ligase family. LigA subfamily. Mg(2+) is required as a cofactor. It depends on Mn(2+) as a cofactor.

It catalyses the reaction NAD(+) + (deoxyribonucleotide)n-3'-hydroxyl + 5'-phospho-(deoxyribonucleotide)m = (deoxyribonucleotide)n+m + AMP + beta-nicotinamide D-nucleotide.. Functionally, DNA ligase that catalyzes the formation of phosphodiester linkages between 5'-phosphoryl and 3'-hydroxyl groups in double-stranded DNA using NAD as a coenzyme and as the energy source for the reaction. It is essential for DNA replication and repair of damaged DNA. The protein is DNA ligase of Alkaliphilus oremlandii (strain OhILAs) (Clostridium oremlandii (strain OhILAs)).